Here is a 140-residue protein sequence, read N- to C-terminus: MNIDDYIEKLEIQKEGFFYKCPYCNYTNADVKAIKKHIKSKHYDIIAKEVENLNKQNKPQRKPMKKQPKKKDDDYKDYMLLFAHKKKCKIYLDNGMIVEGTVKAKDRFNIMVLDAKVDDKEVERIIIQKGHIVALIPLEE.

The C2H2-type zinc finger occupies 21-42 (CPYCNYTNADVKAIKKHIKSKH).

This sequence to M.jannaschii MJECL27.

This is an uncharacterized protein from Methanocaldococcus jannaschii (strain ATCC 43067 / DSM 2661 / JAL-1 / JCM 10045 / NBRC 100440) (Methanococcus jannaschii).